The sequence spans 468 residues: ATP synthase subunit beta (468 aa).

148–155 serves as a coordination point for ATP; that stretch reads GGAGVGKT.

It belongs to the ATPase alpha/beta chains family. F-type ATPases have 2 components, CF(1) - the catalytic core - and CF(0) - the membrane proton channel. CF(1) has five subunits: alpha(3), beta(3), gamma(1), delta(1), epsilon(1). CF(0) has three main subunits: a(1), b(2) and c(9-12). The alpha and beta chains form an alternating ring which encloses part of the gamma chain. CF(1) is attached to CF(0) by a central stalk formed by the gamma and epsilon chains, while a peripheral stalk is formed by the delta and b chains.

Its subcellular location is the cell inner membrane. It catalyses the reaction ATP + H2O + 4 H(+)(in) = ADP + phosphate + 5 H(+)(out). Its function is as follows. Produces ATP from ADP in the presence of a proton gradient across the membrane. The catalytic sites are hosted primarily by the beta subunits. This chain is ATP synthase subunit beta, found in Xanthomonas euvesicatoria pv. vesicatoria (strain 85-10) (Xanthomonas campestris pv. vesicatoria).